The sequence spans 438 residues: Delta(14)-sterol reductase ERG24 (438 aa).

The Lumenal portion of the chain corresponds to 1-13; that stretch reads MVSALNPRTTEFE. A helical transmembrane segment spans residues 14–34; it reads FGGLIGALGISIGLPVFTIIL. Residues 35–71 are Cytoplasmic-facing; that stretch reads NQMIRPDYFIKGFFQNFDIVELWNGIKPLRYYLGNRE. A helical membrane pass occupies residues 72-90; the sequence is LWTVYCLWYGILAVLDVIL. Residues 91–109 lie on the Lumenal side of the membrane; that stretch reads PGRVMKGVQLRDGSKLSYK. The chain crosses the membrane as a helical span at residues 110–127; it reads INGIAMSTTLVLVLAIRW. At 128–147 the chain is on the cytoplasmic side; sequence KLTDGQLPELQYLYENHVSL. A helical transmembrane segment spans residues 148 to 172; it reads CIISILFSFFLATYCYVASFIPLIF. Residues 173-242 are Lumenal-facing; the sequence is KKNGNGKREK…LHHHYLKTGK (70 aa). The helical transmembrane segment at 243–263 threads the bilayer; it reads INDALVLVNFLQGFYIFDGVL. At 264-308 the chain is on the cytoplasmic side; that stretch reads NEEGVLTMMDITTDGFGFMLAFGDLSLVPFTYSLQARYLSVSPVE. The chain crosses the membrane as a helical span at residues 309 to 328; it reads LGWVKVVGILAIMFLGFHIF. The Lumenal segment spans residues 329-368; that stretch reads HSANKQKSEFRQGKLENLKSIQTKRGTKLLCDGWWAKSQH. NADP(+) contacts are provided by residues Lys335, Arg339, Leu358, Trp363, 370-371, Asp410, 414-418, and Tyr425; these read NY and CRLKY. The chain crosses the membrane as a helical span at residues 369 to 387; that stretch reads INYFGDWLISLSWCLATWF. The Cytoplasmic portion of the chain corresponds to 388-438; sequence QTPLTYYYSLYFATLLLHRQQRDEHKCRLKYGENWEEYERKVPYKIIPYVY.

The protein belongs to the ERG4/ERG24 family.

It localises to the membrane. It catalyses the reaction 4,4-dimethyl-5alpha-cholesta-8,24-dien-3beta-ol + NADP(+) = 4,4-dimethyl-5alpha-cholesta-8,14,24-trien-3beta-ol + NADPH + H(+). It participates in steroid biosynthesis; zymosterol biosynthesis; zymosterol from lanosterol: step 2/6. Inhibited by the morpholine antifungal drug fenpropimorph. In terms of biological role, delta(14)-sterol reductase; part of the third module of ergosterol biosynthesis pathway that includes the late steps of the pathway. ERG24 reduces the C14=C15 double bond of 4,4-dimethyl-cholesta-8,14,24-trienol to produce 4,4-dimethyl-cholesta-8,24-dienol. The third module or late pathway involves the ergosterol synthesis itself through consecutive reactions that mainly occur in the endoplasmic reticulum (ER) membrane. Firstly, the squalene synthase ERG9 catalyzes the condensation of 2 farnesyl pyrophosphate moieties to form squalene, which is the precursor of all steroids. Squalene synthase is crucial for balancing the incorporation of farnesyl diphosphate (FPP) into sterol and nonsterol isoprene synthesis. Secondly, the squalene epoxidase ERG1 catalyzes the stereospecific oxidation of squalene to (S)-2,3-epoxysqualene, which is considered to be a rate-limiting enzyme in steroid biosynthesis. Then, the lanosterol synthase ERG7 catalyzes the cyclization of (S)-2,3 oxidosqualene to lanosterol, a reaction that forms the sterol core. In the next steps, lanosterol is transformed to zymosterol through a complex process involving various demethylation, reduction and desaturation reactions. The lanosterol 14-alpha-demethylase ERG11 (also known as CYP51) catalyzes C14-demethylation of lanosterol to produce 4,4'-dimethyl cholesta-8,14,24-triene-3-beta-ol, which is critical for ergosterol biosynthesis. The C-14 reductase ERG24 reduces the C14=C15 double bond of 4,4-dimethyl-cholesta-8,14,24-trienol to produce 4,4-dimethyl-cholesta-8,24-dienol. 4,4-dimethyl-cholesta-8,24-dienol is substrate of the C-4 demethylation complex ERG25-ERG26-ERG27 in which ERG25 catalyzes the three-step monooxygenation required for the demethylation of 4,4-dimethyl and 4alpha-methylsterols, ERG26 catalyzes the oxidative decarboxylation that results in a reduction of the 3-beta-hydroxy group at the C-3 carbon to an oxo group, and ERG27 is responsible for the reduction of the keto group on the C-3. ERG28 has a role as a scaffold to help anchor ERG25, ERG26 and ERG27 to the endoplasmic reticulum and ERG29 regulates the activity of the iron-containing C4-methylsterol oxidase ERG25. Then, the sterol 24-C-methyltransferase ERG6 catalyzes the methyl transfer from S-adenosyl-methionine to the C-24 of zymosterol to form fecosterol. The C-8 sterol isomerase ERG2 catalyzes the reaction which results in unsaturation at C-7 in the B ring of sterols and thus converts fecosterol to episterol. The sterol-C5-desaturase ERG3 then catalyzes the introduction of a C-5 double bond in the B ring to produce 5-dehydroepisterol. The C-22 sterol desaturase ERG5 further converts 5-dehydroepisterol into ergosta-5,7,22,24(28)-tetraen-3beta-ol by forming the C-22(23) double bond in the sterol side chain. Finally, ergosta-5,7,22,24(28)-tetraen-3beta-ol is substrate of the C-24(28) sterol reductase ERG4 to produce ergosterol. The sequence is that of Delta(14)-sterol reductase ERG24 from Saccharomyces cerevisiae (strain ATCC 204508 / S288c) (Baker's yeast).